Consider the following 305-residue polypeptide: Coiled-coil domain-containing protein 83 (305 aa).

The interval 1–25 is disordered; sequence MDSSAKGSKKDAPDGPPKDSKLPVS. Basic and acidic residues predominate over residues 8–21; the sequence is SKKDAPDGPPKDSK. Positions 37–186 form a coiled coil; it reads ENAVERFMFH…LEDEKKRISR (150 aa).

The polypeptide is Coiled-coil domain-containing protein 83 (Ccdc83) (Mus musculus (Mouse)).